A 190-amino-acid chain; its full sequence is Shikimate kinase (190 aa).

Residue 15-20 (GSGKST) coordinates ATP. Ser19 contacts Mg(2+). Substrate-binding residues include Asp37, Arg61, and Gly83. Position 121 (Arg121) interacts with ATP. Arg148 contributes to the substrate binding site.

It belongs to the shikimate kinase family. In terms of assembly, monomer. Mg(2+) is required as a cofactor.

Its subcellular location is the cytoplasm. It carries out the reaction shikimate + ATP = 3-phosphoshikimate + ADP + H(+). The protein operates within metabolic intermediate biosynthesis; chorismate biosynthesis; chorismate from D-erythrose 4-phosphate and phosphoenolpyruvate: step 5/7. Its function is as follows. Catalyzes the specific phosphorylation of the 3-hydroxyl group of shikimic acid using ATP as a cosubstrate. This chain is Shikimate kinase, found in Chlorobium chlorochromatii (strain CaD3).